Reading from the N-terminus, the 308-residue chain is tRNA dimethylallyltransferase (308 aa).

ATP is bound at residue 11–18 (GPTGIGKT). 13 to 18 (TGIGKT) provides a ligand contact to substrate. Residues 36–39 (DSMQ) are interaction with substrate tRNA.

Belongs to the IPP transferase family. In terms of assembly, monomer. It depends on Mg(2+) as a cofactor.

It catalyses the reaction adenosine(37) in tRNA + dimethylallyl diphosphate = N(6)-dimethylallyladenosine(37) in tRNA + diphosphate. In terms of biological role, catalyzes the transfer of a dimethylallyl group onto the adenine at position 37 in tRNAs that read codons beginning with uridine, leading to the formation of N6-(dimethylallyl)adenosine (i(6)A). The protein is tRNA dimethylallyltransferase of Lactobacillus gasseri (strain ATCC 33323 / DSM 20243 / BCRC 14619 / CIP 102991 / JCM 1131 / KCTC 3163 / NCIMB 11718 / NCTC 13722 / AM63).